The following is a 147-amino-acid chain: Hemoglobin subunit epsilon (147 aa).

Residues 3 to 147 (HFTAEEKSVI…VATALAHKYH (145 aa)) enclose the Globin domain. Ser-51 bears the Phosphoserine mark. His-64 and His-93 together coordinate heme b.

Belongs to the globin family. In terms of tissue distribution, red blood cells.

In terms of biological role, hemoglobin epsilon chain is a beta-type chain found in early embryos. The protein is Hemoglobin subunit epsilon (HBE1) of Sus scrofa (Pig).